A 306-amino-acid polypeptide reads, in one-letter code: Homoserine kinase (306 aa).

91–101 (PLARGLGSSAT) provides a ligand contact to ATP.

It belongs to the GHMP kinase family. Homoserine kinase subfamily.

Its subcellular location is the cytoplasm. It catalyses the reaction L-homoserine + ATP = O-phospho-L-homoserine + ADP + H(+). The protein operates within amino-acid biosynthesis; L-threonine biosynthesis; L-threonine from L-aspartate: step 4/5. Catalyzes the ATP-dependent phosphorylation of L-homoserine to L-homoserine phosphate. The chain is Homoserine kinase from Synechocystis sp. (strain ATCC 27184 / PCC 6803 / Kazusa).